The primary structure comprises 321 residues: Lipoyl synthase (321 aa).

Residues C68, C73, C79, C94, C98, C101, and S308 each coordinate [4Fe-4S] cluster. The Radical SAM core domain maps to 80–297 (FNHGTATFMI…KAEAIAMGFT (218 aa)).

It belongs to the radical SAM superfamily. Lipoyl synthase family. It depends on [4Fe-4S] cluster as a cofactor.

Its subcellular location is the cytoplasm. The catalysed reaction is [[Fe-S] cluster scaffold protein carrying a second [4Fe-4S](2+) cluster] + N(6)-octanoyl-L-lysyl-[protein] + 2 oxidized [2Fe-2S]-[ferredoxin] + 2 S-adenosyl-L-methionine + 4 H(+) = [[Fe-S] cluster scaffold protein] + N(6)-[(R)-dihydrolipoyl]-L-lysyl-[protein] + 4 Fe(3+) + 2 hydrogen sulfide + 2 5'-deoxyadenosine + 2 L-methionine + 2 reduced [2Fe-2S]-[ferredoxin]. The protein operates within protein modification; protein lipoylation via endogenous pathway; protein N(6)-(lipoyl)lysine from octanoyl-[acyl-carrier-protein]: step 2/2. Catalyzes the radical-mediated insertion of two sulfur atoms into the C-6 and C-8 positions of the octanoyl moiety bound to the lipoyl domains of lipoate-dependent enzymes, thereby converting the octanoylated domains into lipoylated derivatives. The chain is Lipoyl synthase from Pectobacterium carotovorum subsp. carotovorum (strain PC1).